The primary structure comprises 166 residues: Protein FAM89A (166 aa).

It belongs to the FAM89 family.

This chain is Protein FAM89A (fam89a), found in Xenopus laevis (African clawed frog).